A 970-amino-acid polypeptide reads, in one-letter code: GEM-interacting protein (970 aa).

The residue at position 19 (Ser19) is a Phosphoserine. Disordered regions lie at residues 44-76 (PLLS…EGPV), 224-263 (SEDL…AQAK), and 377-478 (PLDI…ENGL). The span at 56–65 (PTATVTNEAS) shows a compositional bias: polar residues. Residues Ser71, Ser231, Ser234, Ser243, Ser437, and Ser441 each carry the phosphoserine modification. The F-BAR domain maps to 81–344 (EELDLRLIRT…CCAPFEPGQR (264 aa)). Over residues 231-246 (SQGSPEDSAPQASPGP) the composition is skewed to polar residues. Residues 459 to 472 (SSDDFEERDPDLGD) show a composition bias toward acidic residues. The Phorbol-ester/DAG-type zinc finger occupies 493–537 (THQLRRLRGPAKCRECEAFMVSGTECEECFLTCHKRCLETLLILC). One can recognise a Rho-GAP domain in the interval 554-757 (LQLPRDFPEE…FLIVHYEQIF (204 aa)). A Phosphothreonine modification is found at Thr660. The tract at residues 762-878 (LPQATEPPPQ…PVKYPRGGVR (117 aa)) is disordered. A compositionally biased stretch (pro residues) spans 766 to 778 (TEPPPQDSSPAPG). Residues 815–830 (EQHPTATPTEIPTPQS) show a composition bias toward polar residues. A compositionally biased stretch (basic and acidic residues) spans 831–844 (DQREDVAEDTKDGG). Residues 847–863 (VSSQGPEDSLLGTQSRG) show a composition bias toward polar residues. Phosphoserine occurs at positions 885, 907, 914, 919, and 923. A disordered region spans residues 897 to 932 (ETPITSVPRGSLRGRGPSPAAASPEGSPLRRTPLPK). The span at 910–923 (GRGPSPAAASPEGS) shows a compositional bias: low complexity.

In terms of assembly, interacts with GEM through its N-terminal.

In terms of biological role, stimulates, in vitro and in vivo, the GTPase activity of RhoA. The polypeptide is GEM-interacting protein (GMIP) (Homo sapiens (Human)).